Reading from the N-terminus, the 546-residue chain is uncharacterized protein (546 aa).

Disordered regions lie at residues 37 to 101 (KEND…NQKL), 269 to 300 (QNKA…QPEV), and 392 to 443 (LSDL…TSAC). 2 stretches are compositionally biased toward basic and acidic residues: residues 81 to 93 (DDVK…ENNQ) and 274 to 283 (ADLRKTESHG). Over residues 284–298 (THSQSTPPQHSSSQP) the composition is skewed to low complexity.

This is an uncharacterized protein from Homo sapiens (Human).